The following is an 863-amino-acid chain: Leucine--tRNA ligase (863 aa).

A 'HIGH' region motif is present at residues 42–52 (PYPSGRLHMGH). Residues 622–626 (KMSKS) carry the 'KMSKS' region motif. Position 625 (K625) interacts with ATP.

Belongs to the class-I aminoacyl-tRNA synthetase family.

Its subcellular location is the cytoplasm. It carries out the reaction tRNA(Leu) + L-leucine + ATP = L-leucyl-tRNA(Leu) + AMP + diphosphate. The polypeptide is Leucine--tRNA ligase (Shewanella frigidimarina (strain NCIMB 400)).